The chain runs to 383 residues: S-adenosylmethionine synthase (383 aa).

ATP is bound at residue histidine 15. Aspartate 17 provides a ligand contact to Mg(2+). K(+) is bound at residue glutamate 43. Positions 56 and 99 each coordinate L-methionine. Positions 99 to 109 (QSQDINQGVDR) are flexible loop. ATP contacts are provided by residues 164–166 (DAK), 230–231 (RF), aspartate 239, 245–246 (RK), alanine 262, and lysine 266. Residue aspartate 239 participates in L-methionine binding. Residue lysine 270 coordinates L-methionine.

This sequence belongs to the AdoMet synthase family. Homotetramer; dimer of dimers. The cofactor is Mg(2+). K(+) is required as a cofactor.

The protein resides in the cytoplasm. The enzyme catalyses L-methionine + ATP + H2O = S-adenosyl-L-methionine + phosphate + diphosphate. It participates in amino-acid biosynthesis; S-adenosyl-L-methionine biosynthesis; S-adenosyl-L-methionine from L-methionine: step 1/1. Catalyzes the formation of S-adenosylmethionine (AdoMet) from methionine and ATP. The overall synthetic reaction is composed of two sequential steps, AdoMet formation and the subsequent tripolyphosphate hydrolysis which occurs prior to release of AdoMet from the enzyme. The sequence is that of S-adenosylmethionine synthase from Actinobacillus succinogenes (strain ATCC 55618 / DSM 22257 / CCUG 43843 / 130Z).